We begin with the raw amino-acid sequence, 459 residues long: Transmembrane protein 143 (459 aa).

2 consecutive transmembrane segments (helical) span residues 280-300 and 301-321; these read LLNL…GMVV and LTDL…FMGL. Position 332 is a phosphoserine (Ser332). A disordered region spans residues 435–459; it reads GFPKLDPVAPITSEPPQATPSSNIS. Residues 448–459 show a composition bias toward polar residues; sequence EPPQATPSSNIS.

It localises to the membrane. The polypeptide is Transmembrane protein 143 (TMEM143) (Homo sapiens (Human)).